The primary structure comprises 83 residues: Subtilisin-chymotrypsin inhibitor CI-1B (83 aa).

The segment at 1–28 (MRSMEGSVPKYPEPTEGSIGASGAKRSW) is disordered.

It belongs to the protease inhibitor I13 (potato type I serine protease inhibitor) family.

Inhibits both subtilisin and chymotrypsin. The sequence is that of Subtilisin-chymotrypsin inhibitor CI-1B from Hordeum vulgare (Barley).